Consider the following 955-residue polypeptide: Glycine dehydrogenase (decarboxylating) (955 aa).

Lys-705 bears the N6-(pyridoxal phosphate)lysine mark.

The protein belongs to the GcvP family. The glycine cleavage system is composed of four proteins: P, T, L and H. The cofactor is pyridoxal 5'-phosphate.

It carries out the reaction N(6)-[(R)-lipoyl]-L-lysyl-[glycine-cleavage complex H protein] + glycine + H(+) = N(6)-[(R)-S(8)-aminomethyldihydrolipoyl]-L-lysyl-[glycine-cleavage complex H protein] + CO2. In terms of biological role, the glycine cleavage system catalyzes the degradation of glycine. The P protein binds the alpha-amino group of glycine through its pyridoxal phosphate cofactor; CO(2) is released and the remaining methylamine moiety is then transferred to the lipoamide cofactor of the H protein. The protein is Glycine dehydrogenase (decarboxylating) of Aliivibrio fischeri (strain MJ11) (Vibrio fischeri).